Here is a 43-residue protein sequence, read N- to C-terminus: Peroxidase (43 aa).

It belongs to the peroxidase family. Classical plant (class III) peroxidase subfamily. Ca(2+) serves as cofactor. It depends on heme b as a cofactor.

It carries out the reaction 2 a phenolic donor + H2O2 = 2 a phenolic radical donor + 2 H2O. In terms of biological role, removal of H(2)O(2), oxidation of toxic reductants, biosynthesis and degradation of lignin, suberization, auxin catabolism, response to environmental stresses such as wounding, pathogen attack and oxidative stress. These functions might be dependent on each isozyme/isoform in each plant tissue. This chain is Peroxidase, found in Cynara cardunculus var. scolymus (Globe artichoke).